The primary structure comprises 310 residues: tRNA pseudouridine synthase B (310 aa).

Residue Asp49 is the Nucleophile of the active site.

The protein belongs to the pseudouridine synthase TruB family. Type 1 subfamily.

The enzyme catalyses uridine(55) in tRNA = pseudouridine(55) in tRNA. In terms of biological role, responsible for synthesis of pseudouridine from uracil-55 in the psi GC loop of transfer RNAs. This Rhizobium johnstonii (strain DSM 114642 / LMG 32736 / 3841) (Rhizobium leguminosarum bv. viciae) protein is tRNA pseudouridine synthase B.